The sequence spans 198 residues: Glycerol-3-phosphate acyltransferase (198 aa).

4 consecutive transmembrane segments (helical) span residues 3-23 (VEWLLIPFAYLLGSVSSAVIV), 81-101 (LFAAIGFAAFVGHLYPVFFQF), 113-133 (VLLGFAWPVGLMALLTWIGVA), and 153-175 (YVWLWLGSAELVVATLFMSMLLV).

Belongs to the PlsY family. In terms of assembly, probably interacts with PlsX.

It is found in the cell inner membrane. It carries out the reaction an acyl phosphate + sn-glycerol 3-phosphate = a 1-acyl-sn-glycero-3-phosphate + phosphate. It functions in the pathway lipid metabolism; phospholipid metabolism. Functionally, catalyzes the transfer of an acyl group from acyl-phosphate (acyl-PO(4)) to glycerol-3-phosphate (G3P) to form lysophosphatidic acid (LPA). This enzyme utilizes acyl-phosphate as fatty acyl donor, but not acyl-CoA or acyl-ACP. This chain is Glycerol-3-phosphate acyltransferase, found in Methylococcus capsulatus (strain ATCC 33009 / NCIMB 11132 / Bath).